We begin with the raw amino-acid sequence, 691 residues long: Protein 4.2 (691 aa).

Gly2 is lipidated: N-myristoyl glycine. Residues 31–39 form a band 3 binding region; sequence LFVRRGQPF. Ser248 carries the post-translational modification Phosphoserine; by PKA.

Belongs to the transglutaminase superfamily. Transglutaminase family. As to quaternary structure, component of the ankyrin-1 complex in the erythrocyte, composed of ANK1, RHCE, RHAG, SLC4A1, EPB42, GYPA, GYPB and AQP1. Interacts with SLC4A1 (via the cytoplasmic domain); this interaction is mediated by the SLC4A1 Band 3-I dimer. Interacts with ANK1 (via ANK 1-13 repeats). Interacts with AQP1 (via the C-terminal). In terms of processing, both cAMP-dependent kinase (CAPK) and another kinase present in the red-blood cells seem to be able to phosphorylate EPB42.

The protein localises to the cell membrane. It is found in the cytoplasm. The protein resides in the cytoskeleton. Its function is as follows. Component of the ankyrin-1 complex, a multiprotein complex involved in the stability and shape of the erythrocyte membrane. The protein is Protein 4.2 of Homo sapiens (Human).